A 528-amino-acid polypeptide reads, in one-letter code: Equilibrative nucleoside transporter 4 (528 aa).

Residues Met-1 to His-68 lie on the Extracellular side of the membrane. Residues Ala-69–Ile-89 form a helical membrane-spanning segment. The Cytoplasmic segment spans residues Thr-90–Gly-101. A helical membrane pass occupies residues Thr-102 to Leu-122. Residues Asn-123 to Gly-139 lie on the Extracellular side of the membrane. Residues Tyr-140 to Phe-160 traverse the membrane as a helical segment. Over Ser-161 to Tyr-166 the chain is Cytoplasmic. The helical transmembrane segment at Ala-167–Phe-187 threads the bilayer. The Extracellular portion of the chain corresponds to Tyr-188 to Thr-231. A helical membrane pass occupies residues Ile-232–Val-252. Residues Arg-253–Arg-346 are Cytoplasmic-facing. A helical transmembrane segment spans residues Val-347–Pro-367. Residues Gly-368 to Cys-376 are Extracellular-facing. A helical membrane pass occupies residues Val-377–Gly-397. Residues Lys-398–His-411 are Cytoplasmic-facing. A helical membrane pass occupies residues Leu-412–Pro-432. Over Ser-433–Cys-445 the chain is Extracellular. Residues Val-446–Ala-466 form a helical membrane-spanning segment. The Cytoplasmic portion of the chain corresponds to Ala-467–Thr-481. A helical transmembrane segment spans residues Met-482–Thr-504. At Arg-505 to Pro-528 the chain is on the extracellular side. A glycan (N-linked (GlcNAc...) asparagine) is linked at Asn-521.

It belongs to the SLC29A/ENT transporter (TC 2.A.57) family. In terms of processing, N-glycosylated. Expressed in heart. Expressed in choroid plexus.

It localises to the cell membrane. It is found in the apical cell membrane. The enzyme catalyses serotonin(out) = serotonin(in). It carries out the reaction dopamine(out) = dopamine(in). The catalysed reaction is (R)-noradrenaline(out) = (R)-noradrenaline(in). It catalyses the reaction (R)-adrenaline(out) = (R)-adrenaline(in). The enzyme catalyses histamine(out) = histamine(in). It carries out the reaction tyramine(in) = tyramine(out). The catalysed reaction is guanidine(out) = guanidine(in). It catalyses the reaction adenine(out) = adenine(in). The enzyme catalyses adenosine(in) = adenosine(out). Activated at acidic pH. Its function is as follows. Electrogenic voltage-dependent transporter that mediates the transport of a variety of endogenous bioactive amines, cationic xenobiotics and drugs. Utilizes the physiologic inside-negative membrane potential as a driving force to facilitate cellular uptake of organic cations. Functions as a Na(+)- and Cl(-)-independent bidirectional transporter. Substrate transport is pH-dependent and enhanced under acidic condition, which is most likely the result of allosteric changes in the transporter structure. Implicated in monoamine neurotransmitters uptake such as serotonin, dopamine, adrenaline/epinephrine, noradrenaline/norepinephrine, histamine and tyramine, thereby supporting a role in homeostatic regulation of aminergic neurotransmission in the central nervous system. Also responsible for the uptake of bioactive amines and drugs through the blood-cerebrospinal fluid (CSF) barrier, from the CSF into choroid plexus epithelial cells, thereby playing a significant role in the clearance of cationic neurotoxins, xenobiotics and metabolic waste in the brain. Involved in bidirectional transport of the purine nucleoside adenosine and plays a role in the regulation of extracellular adenosine concentrations in cardiac tissues, in particular during ischemia. May be involved in organic cation uptake from the tubular lumen into renal tubular cells, thereby contributing to organic cation reabsorption in the kidney. Also transports adenine and guanidine. In Mus musculus (Mouse), this protein is Equilibrative nucleoside transporter 4.